Reading from the N-terminus, the 276-residue chain is NAD kinase (276 aa).

The active-site Proton acceptor is Asp68. Residues 68-69, Arg73, 138-139, Lys149, Asp168, 179-184, and Gln237 each bind NAD(+); these read DG, NE, and TAYSLS.

Belongs to the NAD kinase family. Requires a divalent metal cation as cofactor.

The protein localises to the cytoplasm. It catalyses the reaction NAD(+) + ATP = ADP + NADP(+) + H(+). Involved in the regulation of the intracellular balance of NAD and NADP, and is a key enzyme in the biosynthesis of NADP. Catalyzes specifically the phosphorylation on 2'-hydroxyl of the adenosine moiety of NAD to yield NADP. The sequence is that of NAD kinase from Methanopyrus kandleri (strain AV19 / DSM 6324 / JCM 9639 / NBRC 100938).